A 525-amino-acid chain; its full sequence is Arylsulfatase G (525 aa).

A signal peptide spans 1-16 (MGWLFLKVLLAGVSFS). Ca(2+)-binding residues include aspartate 44, aspartate 45, and cysteine 84. Cysteine 84 (nucleophile) is an active-site residue. Residue cysteine 84 is modified to 3-oxoalanine (Cys). A glycan (N-linked (GlcNAc...) asparagine) is linked at asparagine 117. A substrate-binding site is contributed by lysine 137. Histidine 139 is a catalytic residue. Serine 162 is a binding site for substrate. An N-linked (GlcNAc...) asparagine glycan is attached at asparagine 215. Residue histidine 251 participates in substrate binding. Residues aspartate 302 and asparagine 303 each contribute to the Ca(2+) site. Residues asparagine 356 and asparagine 497 are each glycosylated (N-linked (GlcNAc...) asparagine).

It belongs to the sulfatase family. It depends on Ca(2+) as a cofactor. In terms of processing, N-glycosylated. N-glycosylated with both high mannose and complex type sugars. Post-translationally, the conversion to 3-oxoalanine (also known as C-formylglycine, FGly), of a serine or cysteine residue in prokaryotes and of a cysteine residue in eukaryotes, is critical for catalytic activity. The 63-kDa precursor undergoes proteolytic processing in two steps, yielding two fragments in the first step (apparent molecular masses of 44 and 18 kDa). In the second step, the 44-kDa fragment is processed further to the 34- and 10-kDa chains. The 10-kDa chain is a cleavage product of the 44-kDa fragment but linked to the 18-kDa chain through a disulfide bridge. In terms of tissue distribution, widely expressed, with very low expression in brain, lung, heart and skeletal muscle.

The protein localises to the lysosome. The catalysed reaction is an aryl sulfate + H2O = a phenol + sulfate + H(+). The enzyme catalyses Hydrolysis of the 3-sulfate groups of the N-sulfo-D-glucosamine 3-O-sulfate units of heparin.. Inhibited by phosphate. The phosphate forms a covalent bond with the active site 3-oxoalanine. In terms of biological role, displays arylsulfatase activity at acidic pH towards artificial substrates, such as p-nitrocatechol sulfate and also, but with a lower activity towards p-nitrophenyl sulfate and 4-methylumbelliferyl sulfate. Catalyzes the hydrolysis of the 3-sulfate groups of the N-sulfo-D-glucosamine 3-O-sulfate units of heparin. The protein is Arylsulfatase G (ARSG) of Homo sapiens (Human).